Reading from the N-terminus, the 428-residue chain is Anaerobic glycerol-3-phosphate dehydrogenase subunit B (428 aa).

This sequence belongs to the anaerobic G-3-P dehydrogenase subunit B family. As to quaternary structure, composed of a catalytic GlpA/B dimer and of membrane bound GlpC. It depends on FMN as a cofactor.

It catalyses the reaction a quinone + sn-glycerol 3-phosphate = dihydroxyacetone phosphate + a quinol. The protein operates within polyol metabolism; glycerol degradation via glycerol kinase pathway; glycerone phosphate from sn-glycerol 3-phosphate (anaerobic route): step 1/1. Its function is as follows. Conversion of glycerol 3-phosphate to dihydroxyacetone. Uses fumarate or nitrate as electron acceptor. The polypeptide is Anaerobic glycerol-3-phosphate dehydrogenase subunit B (Actinobacillus pleuropneumoniae serotype 5b (strain L20)).